A 356-amino-acid polypeptide reads, in one-letter code: Phospho-N-acetylmuramoyl-pentapeptide-transferase (356 aa).

The next 10 membrane-spanning stretches (helical) occupy residues 27 to 47 (ATLMTALVIGLIIGPRFINML), 73 to 93 (TMGGLMIIVSLVLSLVLWMDL), 97 to 117 (FVWACLAVTVGFGLIGFLDDL), 138 to 158 (FLVAGIASYIIVSQINTWLYV), 165 to 185 (AIPLGPFYYVFAAVVIVGAGN), 195 to 215 (GLAIMPVIIAAGTFAIIAYLA), 232 to 252 (AGELAIFCAAIMGAGLAFLWF), 258 to 278 (AVFMGDTGSLALGGALGAIAV), 284 to 304 (IVLAIVGGLFVFEALSVIIQV), and 333 to 353 (KVVIRFWIVSIVLALMGLATL).

Belongs to the glycosyltransferase 4 family. MraY subfamily. Mg(2+) is required as a cofactor.

Its subcellular location is the cell inner membrane. The enzyme catalyses UDP-N-acetyl-alpha-D-muramoyl-L-alanyl-gamma-D-glutamyl-meso-2,6-diaminopimeloyl-D-alanyl-D-alanine + di-trans,octa-cis-undecaprenyl phosphate = di-trans,octa-cis-undecaprenyl diphospho-N-acetyl-alpha-D-muramoyl-L-alanyl-D-glutamyl-meso-2,6-diaminopimeloyl-D-alanyl-D-alanine + UMP. Its pathway is cell wall biogenesis; peptidoglycan biosynthesis. Functionally, catalyzes the initial step of the lipid cycle reactions in the biosynthesis of the cell wall peptidoglycan: transfers peptidoglycan precursor phospho-MurNAc-pentapeptide from UDP-MurNAc-pentapeptide onto the lipid carrier undecaprenyl phosphate, yielding undecaprenyl-pyrophosphoryl-MurNAc-pentapeptide, known as lipid I. The sequence is that of Phospho-N-acetylmuramoyl-pentapeptide-transferase from Erythrobacter litoralis (strain HTCC2594).